The primary structure comprises 70 residues: Large ribosomal subunit protein bL31 (70 aa).

Positions 16, 18, 37, and 40 each coordinate Zn(2+).

The protein belongs to the bacterial ribosomal protein bL31 family. Type A subfamily. Part of the 50S ribosomal subunit. The cofactor is Zn(2+).

Binds the 23S rRNA. This chain is Large ribosomal subunit protein bL31, found in Klebsiella pneumoniae (strain 342).